Reading from the N-terminus, the 804-residue chain is Probable basic-leucine zipper transcription factor C (804 aa).

2 disordered regions span residues 86–148 (FISP…NDIN) and 275–371 (YGNV…PKKR). The span at 90–145 (NNNNNNNNNNNNNNNNNNNNNNNNNNNNNNNNNNNNNNNNNNNNNNNNNNNNNNNN) shows a compositional bias: low complexity. A compositionally biased stretch (polar residues) spans 275 to 291 (YGNVSDNSSPETNFSYA). Over residues 292 to 334 (SPSSPSSTQSQSSPYEQQPLSPNPTISLSSSISVTATTTTRPN) the composition is skewed to low complexity. Residues 335–356 (ATEKTKESSLKSKSKSNEKDKE) show a composition bias toward basic and acidic residues. The 64-residue stretch at 415 to 478 (ALNYQFRKIK…DQYKLQEKQK (64 aa)) folds into the bZIP domain. Residues 421-436 (RKIKNRESARRSRERK) form a basic motif region. A leucine-zipper region spans residues 443-450 (LEAKIAEI). The disordered stretch occupies residues 670–693 (KNCNNNNENNNNNDNNKNSDDEKG). Low complexity predominate over residues 672-685 (CNNNNENNNNNDNN).

It belongs to the bZIP family.

It localises to the nucleus. Its function is as follows. Probable transcriptional regulator. The sequence is that of Probable basic-leucine zipper transcription factor C (bzpC) from Dictyostelium discoideum (Social amoeba).